The chain runs to 725 residues: Eukaryotic translation initiation factor 3 subunit B (725 aa).

Position 23 is a phosphoserine (Ser-23). The RRM domain occupies 39 to 129 (TVVVIEGAPV…HTFVVRKLNQ (91 aa)). Ser-135 is modified (phosphoserine). Thr-136 is subject to Phosphothreonine. 3 WD repeats span residues 190–229 (DREN…MCAR), 304–344 (DGKK…LVDK), and 347–386 (IKID…QPAR). Residues 630–671 (LTKEDMKKIRKKLKDYNRLFDEEDIAEQSSANRELAARRRQL) are a coiled coil.

This sequence belongs to the eIF-3 subunit B family. Component of the eukaryotic translation initiation factor 3 (eIF-3) complex. The eIF-3 complex appears to include tif32/eif3a, SPAC25G10.08/eif3b, tif33/eif3c, SPBC4C3.07/eif3f, tif35/eif3g and sum1/eif3i. This set of common subunits may also associate exclusively with either moe1/eif3d and int6/eif3e, or with SPAC821.05/eif3h and SPAC1751.03/eif3m. The eIF-3 complex may also include SPAC3A12.13c/eif3j.

It is found in the cytoplasm. In terms of biological role, RNA-binding component of the eukaryotic translation initiation factor 3 (eIF-3) complex, which is involved in protein synthesis of a specialized repertoire of mRNAs and, together with other initiation factors, stimulates binding of mRNA and methionyl-tRNAi to the 40S ribosome. The eIF-3 complex specifically targets and initiates translation of a subset of mRNAs involved in cell proliferation. The polypeptide is Eukaryotic translation initiation factor 3 subunit B (Schizosaccharomyces pombe (strain 972 / ATCC 24843) (Fission yeast)).